We begin with the raw amino-acid sequence, 505 residues long: tRNA-2-methylthio-N(6)-dimethylallyladenosine synthase (505 aa).

One can recognise an MTTase N-terminal domain in the interval 10-126; that stretch reads RSYEVRTYGC…LPALLDRARH (117 aa). [4Fe-4S] cluster-binding residues include cysteine 19, cysteine 55, cysteine 89, cysteine 163, cysteine 167, and cysteine 170. Residues 149–385 enclose the Radical SAM core domain; sequence RESAYAGWVS…IALQEQITLE (237 aa). One can recognise a TRAM domain in the interval 388-459; sequence QKLVGAEVEL…PHHLVADTPV (72 aa).

The protein belongs to the methylthiotransferase family. MiaB subfamily. Monomer. It depends on [4Fe-4S] cluster as a cofactor.

The protein resides in the cytoplasm. The enzyme catalyses N(6)-dimethylallyladenosine(37) in tRNA + (sulfur carrier)-SH + AH2 + 2 S-adenosyl-L-methionine = 2-methylsulfanyl-N(6)-dimethylallyladenosine(37) in tRNA + (sulfur carrier)-H + 5'-deoxyadenosine + L-methionine + A + S-adenosyl-L-homocysteine + 2 H(+). Its function is as follows. Catalyzes the methylthiolation of N6-(dimethylallyl)adenosine (i(6)A), leading to the formation of 2-methylthio-N6-(dimethylallyl)adenosine (ms(2)i(6)A) at position 37 in tRNAs that read codons beginning with uridine. This is tRNA-2-methylthio-N(6)-dimethylallyladenosine synthase from Rhodococcus jostii (strain RHA1).